The primary structure comprises 476 residues: MDAVAFEDVAVNFTQEEWALLGPSQKNLYRYVMQETIRNLDCIRMIWEEQNTEDQYKNPRRNLRCHMVERFSESKDSSQCGETFSLIRDSIVNNSICPGEDPCQSAECEEVIMGHLSLNSHIRVDSGHKPHEYQEYGEKPHTHKQRGKAFSYHHSFQSRGRPHTGKKRYECKECGKTFSSRRNLRRHMVVQGGNRPYKCKLCGKAFFWPSLLRMHERTHTGEKPYECKQCSKAFPFYSSYRRHERMHTGEKPYECKQCSKALPDSSSYIRHERTHTGEKPYTCKQCGKAFSVSSSLRRHETTHSAEKPYECKQCGKTFHHLGSFQIHMKRHTGDRPHKCKICGKGFDRPSLVRYHERIHTGEKPYECKQCGKTLSHSSSFRRHMIMHTGGGPHKCKICGKAFVYPSVCQRHEKSHSGEKPYECKQCGKALSHSSSFRRHMVMHTGDGPNKCKVCGKAFVYPSVCQRHEKTHWRETI.

The 93-residue stretch at 4-96 (VAFEDVAVNF…IRDSIVNNSI (93 aa)) folds into the KRAB domain. A C2H2-type 1; degenerate zinc finger spans residues 101–125 (DPCQSAECEEVIMGHLSLNSHIRVD). The C2H2-type 2; degenerate zinc-finger motif lies at 169–191 (YECKECGKTFSSRRNLRRHMVVQ). 10 consecutive C2H2-type zinc fingers follow at residues 197 to 219 (YKCK…ERTH), 225 to 247 (YECK…ERMH), 253 to 275 (YECK…ERTH), 281 to 303 (YTCK…ETTH), 309 to 331 (YECK…MKRH), 337 to 359 (HKCK…ERIH), 365 to 387 (YECK…MIMH), 393 to 415 (HKCK…EKSH), 421 to 443 (YECK…MVMH), and 449 to 471 (NKCK…EKTH).

The protein belongs to the krueppel C2H2-type zinc-finger protein family.

Its subcellular location is the nucleus. In terms of biological role, may be involved in transcriptional regulation. This is Zinc finger protein 563 (ZNF563) from Homo sapiens (Human).